Consider the following 509-residue polypeptide: Maturase K (509 aa).

It belongs to the intron maturase 2 family. MatK subfamily.

The protein localises to the plastid. Its subcellular location is the chloroplast. In terms of biological role, usually encoded in the trnK tRNA gene intron. Probably assists in splicing its own and other chloroplast group II introns. The polypeptide is Maturase K (Galbulimima belgraveana (Northern pigeonberry ash)).